We begin with the raw amino-acid sequence, 232 residues long: 5'-methylthioadenosine/S-adenosylhomocysteine nucleosidase (232 aa).

The Proton acceptor role is filled by glutamate 12. Residues glycine 78, isoleucine 152, and 173–174 (ME) each bind substrate. The active-site Proton donor is aspartate 197.

Belongs to the PNP/UDP phosphorylase family. MtnN subfamily. In terms of assembly, homodimer.

It catalyses the reaction S-adenosyl-L-homocysteine + H2O = S-(5-deoxy-D-ribos-5-yl)-L-homocysteine + adenine. The enzyme catalyses S-methyl-5'-thioadenosine + H2O = 5-(methylsulfanyl)-D-ribose + adenine. It carries out the reaction 5'-deoxyadenosine + H2O = 5-deoxy-D-ribose + adenine. It participates in amino-acid biosynthesis; L-methionine biosynthesis via salvage pathway; S-methyl-5-thio-alpha-D-ribose 1-phosphate from S-methyl-5'-thioadenosine (hydrolase route): step 1/2. Its function is as follows. Catalyzes the irreversible cleavage of the glycosidic bond in both 5'-methylthioadenosine (MTA) and S-adenosylhomocysteine (SAH/AdoHcy) to adenine and the corresponding thioribose, 5'-methylthioribose and S-ribosylhomocysteine, respectively. Also cleaves 5'-deoxyadenosine, a toxic by-product of radical S-adenosylmethionine (SAM) enzymes, into 5-deoxyribose and adenine. Thus, is required for in vivo function of the radical SAM enzymes biotin synthase and lipoic acid synthase, that are inhibited by 5'-deoxyadenosine accumulation. In Salmonella enteritidis PT4 (strain P125109), this protein is 5'-methylthioadenosine/S-adenosylhomocysteine nucleosidase.